The sequence spans 238 residues: Putative tyrosine-protein phosphatase OCA1 (238 aa).

Positions 1 to 43 are disordered; the sequence is MTSKVGEYEDVPEDESRLTEENVSVPEEEVEDEDEEEDDDDDH. Residue Thr2 is modified to N-acetylthreonine. Ser24 bears the Phosphoserine mark. Positions 26–42 are enriched in acidic residues; sequence PEEEVEDEDEEEDDDDD. The Tyrosine-protein phosphatase domain occupies 72–230; it reads NFCPVERYLY…LVKIDKNKAP (159 aa). Cys168 serves as the catalytic Phosphocysteine intermediate.

The protein belongs to the protein-tyrosine phosphatase family.

Its subcellular location is the cytoplasm. It catalyses the reaction O-phospho-L-tyrosyl-[protein] + H2O = L-tyrosyl-[protein] + phosphate. Putative tyrosine-protein phosphatase required for protection against superoxide stress. Involved in cell-cycle delay in response to linoleic acid hydroperoxide (LoaOOH). The chain is Putative tyrosine-protein phosphatase OCA1 (OCA1) from Saccharomyces cerevisiae (strain YJM789) (Baker's yeast).